The following is a 352-amino-acid chain: UDP-N-acetylglucosamine--N-acetylmuramyl-(pentapeptide) pyrophosphoryl-undecaprenol N-acetylglucosamine transferase (352 aa).

UDP-N-acetyl-alpha-D-glucosamine is bound by residues serine 195 and glutamine 287.

The protein belongs to the glycosyltransferase 28 family. MurG subfamily.

Its subcellular location is the cell membrane. The catalysed reaction is Mur2Ac(oyl-L-Ala-gamma-D-Glu-L-Lys-D-Ala-D-Ala)-di-trans,octa-cis-undecaprenyl diphosphate + UDP-N-acetyl-alpha-D-glucosamine = beta-D-GlcNAc-(1-&gt;4)-Mur2Ac(oyl-L-Ala-gamma-D-Glu-L-Lys-D-Ala-D-Ala)-di-trans,octa-cis-undecaprenyl diphosphate + UDP + H(+). Its pathway is cell wall biogenesis; peptidoglycan biosynthesis. In terms of biological role, cell wall formation. Catalyzes the transfer of a GlcNAc subunit on undecaprenyl-pyrophosphoryl-MurNAc-pentapeptide (lipid intermediate I) to form undecaprenyl-pyrophosphoryl-MurNAc-(pentapeptide)GlcNAc (lipid intermediate II). This is UDP-N-acetylglucosamine--N-acetylmuramyl-(pentapeptide) pyrophosphoryl-undecaprenol N-acetylglucosamine transferase from Streptococcus pneumoniae (strain Taiwan19F-14).